Reading from the N-terminus, the 357-residue chain is Set1 complex component swd2 (357 aa).

WD repeat units follow at residues 24-65 (NFVG…KSLA), 110-149 (GHKQTVTSIDVSPADETFLSASLDNTIRLWDLRSPNCQGL), 199-241 (PPHV…RVPS), and 247-289 (TQDG…QTVN).

It belongs to the WD repeat SWD2 family. Component of the Set1 complex composed of ash2, sdc1, set1, shg1, spp1, swd1, swd2 and swd3.

The protein resides in the nucleus. In terms of biological role, the Set1 complex specifically methylates 'Lys-4' of histone H3. The sequence is that of Set1 complex component swd2 from Schizosaccharomyces pombe (strain 972 / ATCC 24843) (Fission yeast).